Here is a 288-residue protein sequence, read N- to C-terminus: UDP-3-O-acyl-N-acetylglucosamine deacetylase (288 aa).

Zn(2+) is bound by residues H79, H236, and D240. H263 functions as the Proton donor in the catalytic mechanism.

The protein belongs to the LpxC family. The cofactor is Zn(2+).

It carries out the reaction a UDP-3-O-[(3R)-3-hydroxyacyl]-N-acetyl-alpha-D-glucosamine + H2O = a UDP-3-O-[(3R)-3-hydroxyacyl]-alpha-D-glucosamine + acetate. It functions in the pathway glycolipid biosynthesis; lipid IV(A) biosynthesis; lipid IV(A) from (3R)-3-hydroxytetradecanoyl-[acyl-carrier-protein] and UDP-N-acetyl-alpha-D-glucosamine: step 2/6. Its function is as follows. Catalyzes the hydrolysis of UDP-3-O-myristoyl-N-acetylglucosamine to form UDP-3-O-myristoylglucosamine and acetate, the committed step in lipid A biosynthesis. The sequence is that of UDP-3-O-acyl-N-acetylglucosamine deacetylase from Rickettsia bellii (strain OSU 85-389).